A 418-amino-acid chain; its full sequence is Light-independent protochlorophyllide reductase subunit N (418 aa).

Residues Cys-17, Cys-42, and Cys-103 each contribute to the [4Fe-4S] cluster site.

It belongs to the BchN/ChlN family. Protochlorophyllide reductase is composed of three subunits; ChlL, ChlN and ChlB. Forms a heterotetramer of two ChlB and two ChlN subunits. The cofactor is [4Fe-4S] cluster.

It catalyses the reaction chlorophyllide a + oxidized 2[4Fe-4S]-[ferredoxin] + 2 ADP + 2 phosphate = protochlorophyllide a + reduced 2[4Fe-4S]-[ferredoxin] + 2 ATP + 2 H2O. Its pathway is porphyrin-containing compound metabolism; chlorophyll biosynthesis (light-independent). In terms of biological role, component of the dark-operative protochlorophyllide reductase (DPOR) that uses Mg-ATP and reduced ferredoxin to reduce ring D of protochlorophyllide (Pchlide) to form chlorophyllide a (Chlide). This reaction is light-independent. The NB-protein (ChlN-ChlB) is the catalytic component of the complex. The chain is Light-independent protochlorophyllide reductase subunit N from Prochlorococcus marinus subsp. pastoris (strain CCMP1986 / NIES-2087 / MED4).